The chain runs to 140 residues: ISDra2 transposase TnpA (140 aa).

Mg(2+) contacts are provided by histidine 67 and histidine 69. The interval alanine 127 to isoleucine 133 is mobile alpha helix. Tyrosine 132 functions as the Nucleophile in the catalytic mechanism. Glutamine 136 serves as a coordination point for Mg(2+).

This sequence belongs to the transposase 17 family. Homodimer. The cofactor is Mg(2+).

Its activity is regulated as follows. Both the excision and insertion steps are inhibited by TnpB. Its function is as follows. A transposase that is part of insertion sequence (IS) element ISDra2, it is necessary and sufficient for both transposon excision and insertion of ISDra2. This protein alone can be provided in trans and allows transposition of an empty IS element (tnpA or tnpA-tnpB replaced by a selectable marker). ISDra2 binds subterminal imperfect palindromes at the left (LE) and right (RE) ends of the element and cleaves only the 'top strand' which is circularized and subsequently reinserted into the DNA target. This is called a 'peel and paste' mechanism and increases the copy number of the IS. Transposition is linked to DNA replication in the absence of irradiation, with maximal activity when the 'top strand' is on the replication lagging strand, and occurs preferentially on the lagging strand. The IS element inserts 3' of the target sequence 5'-TTGAT-3'; target duplication has not been observed. The protein is ISDra2 transposase TnpA of Deinococcus radiodurans (strain ATCC 13939 / DSM 20539 / JCM 16871 / CCUG 27074 / LMG 4051 / NBRC 15346 / NCIMB 9279 / VKM B-1422 / R1).